A 528-amino-acid polypeptide reads, in one-letter code: GTPase Der (528 aa).

Composition is skewed to acidic residues over residues 1 to 12 and 30 to 62; these read MDVEGAFADEEE and GYDD…PDFG. The interval 1-62 is disordered; it reads MDVEGAFADE…EDDFAAPDFG (62 aa). 2 consecutive EngA-type G domains span residues 90 to 253 and 263 to 436; these read CTVA…PEEP and RRVA…ENWD. GTP-binding positions include 96–103, 143–147, 205–208, 269–276, 316–320, and 381–384; these read GRPNVGKS, DTGGW, NKFD, GKPNVGKS, DTAGL, and NKWD. A KH-like domain is found at 437–519; the sequence is RRVSTGQLNN…PIRIAVRVRE (83 aa).

The protein belongs to the TRAFAC class TrmE-Era-EngA-EngB-Septin-like GTPase superfamily. EngA (Der) GTPase family. Associates with the 50S ribosomal subunit.

Functionally, GTPase that plays an essential role in the late steps of ribosome biogenesis. This is GTPase Der from Corynebacterium efficiens (strain DSM 44549 / YS-314 / AJ 12310 / JCM 11189 / NBRC 100395).